The following is a 281-amino-acid chain: Glutamate racemase (281 aa).

Substrate is bound by residues 13–14 (DS) and 45–46 (YG). The active-site Proton donor/acceptor is C76. Substrate is bound at residue 77–78 (NT). Catalysis depends on C185, which acts as the Proton donor/acceptor. 186-187 (TH) provides a ligand contact to substrate.

This sequence belongs to the aspartate/glutamate racemases family.

It catalyses the reaction L-glutamate = D-glutamate. The protein operates within cell wall biogenesis; peptidoglycan biosynthesis. In terms of biological role, provides the (R)-glutamate required for cell wall biosynthesis. This Rippkaea orientalis (strain PCC 8801 / RF-1) (Cyanothece sp. (strain PCC 8801)) protein is Glutamate racemase.